Here is a 233-residue protein sequence, read N- to C-terminus: Probable chemoreceptor glutamine deamidase CheD (233 aa).

It belongs to the CheD family.

It catalyses the reaction L-glutaminyl-[protein] + H2O = L-glutamyl-[protein] + NH4(+). Functionally, probably deamidates glutamine residues to glutamate on methyl-accepting chemotaxis receptors (MCPs), playing an important role in chemotaxis. The chain is Probable chemoreceptor glutamine deamidase CheD from Vibrio cholerae serotype O1 (strain ATCC 39315 / El Tor Inaba N16961).